Reading from the N-terminus, the 248-residue chain is Probable transcriptional regulatory protein Ecaj_0351 (248 aa).

The tract at residues 1–21 (MAGHSQFANIKHRKGAQDAKR) is disordered.

Belongs to the TACO1 family.

It localises to the cytoplasm. This Ehrlichia canis (strain Jake) protein is Probable transcriptional regulatory protein Ecaj_0351.